The sequence spans 541 residues: 5' exonuclease Apollo (541 aa).

Lys334 participates in a covalent cross-link: Glycyl lysine isopeptide (Lys-Gly) (interchain with G-Cter in SUMO2). Residues 455 to 475 (PLLSRGDSGSPARGNQSDCVG) form a disordered region. Residues 492–507 (ESRGLALKYLLTPVHF) carry the TBM motif.

This sequence belongs to the DNA repair metallo-beta-lactamase (DRMBL) family. In terms of assembly, interacts with MUS81, MRE11 and FANCD2. Interacts with HSPA2, HSPA8 and HSPA14. Interacts with SPAG5. Interacts with TERF2; the interaction is direct. Post-translationally, ubiquitinated, leading to its degradation. Interaction with TERF2 protects it from ubiquitination.

The protein resides in the chromosome. It localises to the telomere. The protein localises to the nucleus. It is found in the cytoplasm. Its subcellular location is the cytoskeleton. The protein resides in the microtubule organizing center. It localises to the centrosome. The catalysed reaction is a beta-lactam + H2O = a substituted beta-amino acid. In terms of biological role, 5'-3' exonuclease that plays a central role in telomere maintenance and protection during S-phase. Participates in the protection of telomeres against non-homologous end-joining (NHEJ)-mediated repair, thereby ensuring that telomeres do not fuse. Plays a key role in telomeric loop (T loop) formation by being recruited by TERF2 at the leading end telomeres and by processing leading-end telomeres immediately after their replication via its exonuclease activity: generates 3' single-stranded overhang at the leading end telomeres avoiding blunt leading-end telomeres that are vulnerable to end-joining reactions and expose the telomere end in a manner that activates the DNA repair pathways. Together with TERF2, required to protect telomeres from replicative damage during replication by controlling the amount of DNA topoisomerase (TOP1, TOP2A and TOP2B) needed for telomere replication during fork passage and prevent aberrant telomere topology. Also involved in response to DNA damage: plays a role in response to DNA interstrand cross-links (ICLs) by facilitating double-strand break formation. In case of spindle stress, involved in prophase checkpoint. Possesses beta-lactamase activity, catalyzing the hydrolysis of penicillin G and nitrocefin. Exhibits no activity towards other beta-lactam antibiotic classes including cephalosporins (cefotaxime) and carbapenems (imipenem). The chain is 5' exonuclease Apollo (Dclre1b) from Mus musculus (Mouse).